A 368-amino-acid polypeptide reads, in one-letter code: 4-hydroxy-3-methylbut-2-en-1-yl diphosphate synthase (flavodoxin) (368 aa).

Positions 268, 271, 303, and 310 each coordinate [4Fe-4S] cluster.

This sequence belongs to the IspG family. Requires [4Fe-4S] cluster as cofactor.

It carries out the reaction (2E)-4-hydroxy-3-methylbut-2-enyl diphosphate + oxidized [flavodoxin] + H2O + 2 H(+) = 2-C-methyl-D-erythritol 2,4-cyclic diphosphate + reduced [flavodoxin]. Its pathway is isoprenoid biosynthesis; isopentenyl diphosphate biosynthesis via DXP pathway; isopentenyl diphosphate from 1-deoxy-D-xylulose 5-phosphate: step 5/6. Its function is as follows. Converts 2C-methyl-D-erythritol 2,4-cyclodiphosphate (ME-2,4cPP) into 1-hydroxy-2-methyl-2-(E)-butenyl 4-diphosphate. This Bacillus cytotoxicus (strain DSM 22905 / CIP 110041 / 391-98 / NVH 391-98) protein is 4-hydroxy-3-methylbut-2-en-1-yl diphosphate synthase (flavodoxin).